The chain runs to 200 residues: Large ribosomal subunit protein bL9 (200 aa).

The protein belongs to the bacterial ribosomal protein bL9 family.

Functionally, binds to the 23S rRNA. This Ruegeria pomeroyi (strain ATCC 700808 / DSM 15171 / DSS-3) (Silicibacter pomeroyi) protein is Large ribosomal subunit protein bL9.